A 211-amino-acid chain; its full sequence is Thiamine-phosphate synthase (211 aa).

4-amino-2-methyl-5-(diphosphooxymethyl)pyrimidine is bound by residues 37 to 41 (QLRIK) and Asn-69. Asp-70 and Asp-89 together coordinate Mg(2+). Residue Ser-108 coordinates 4-amino-2-methyl-5-(diphosphooxymethyl)pyrimidine. 134 to 136 (TQT) is a binding site for 2-[(2R,5Z)-2-carboxy-4-methylthiazol-5(2H)-ylidene]ethyl phosphate. Lys-137 is a 4-amino-2-methyl-5-(diphosphooxymethyl)pyrimidine binding site. 2-[(2R,5Z)-2-carboxy-4-methylthiazol-5(2H)-ylidene]ethyl phosphate contacts are provided by residues Gly-166 and 186 to 187 (VS).

It belongs to the thiamine-phosphate synthase family. Mg(2+) is required as a cofactor.

It catalyses the reaction 2-[(2R,5Z)-2-carboxy-4-methylthiazol-5(2H)-ylidene]ethyl phosphate + 4-amino-2-methyl-5-(diphosphooxymethyl)pyrimidine + 2 H(+) = thiamine phosphate + CO2 + diphosphate. The catalysed reaction is 2-(2-carboxy-4-methylthiazol-5-yl)ethyl phosphate + 4-amino-2-methyl-5-(diphosphooxymethyl)pyrimidine + 2 H(+) = thiamine phosphate + CO2 + diphosphate. The enzyme catalyses 4-methyl-5-(2-phosphooxyethyl)-thiazole + 4-amino-2-methyl-5-(diphosphooxymethyl)pyrimidine + H(+) = thiamine phosphate + diphosphate. Its pathway is cofactor biosynthesis; thiamine diphosphate biosynthesis; thiamine phosphate from 4-amino-2-methyl-5-diphosphomethylpyrimidine and 4-methyl-5-(2-phosphoethyl)-thiazole: step 1/1. In terms of biological role, condenses 4-methyl-5-(beta-hydroxyethyl)thiazole monophosphate (THZ-P) and 2-methyl-4-amino-5-hydroxymethyl pyrimidine pyrophosphate (HMP-PP) to form thiamine monophosphate (TMP). The polypeptide is Thiamine-phosphate synthase (Escherichia coli O157:H7).